The primary structure comprises 356 residues: UDP-N-acetylenolpyruvoylglucosamine reductase (356 aa).

Residues 19-227 (LGGPAARFCS…RDAVLSLRRS (209 aa)) form the FAD-binding PCMH-type domain. Arg167 is an active-site residue. The active-site Proton donor is Ser244. The active site involves Glu348.

The protein belongs to the MurB family. FAD serves as cofactor.

It localises to the cytoplasm. It carries out the reaction UDP-N-acetyl-alpha-D-muramate + NADP(+) = UDP-N-acetyl-3-O-(1-carboxyvinyl)-alpha-D-glucosamine + NADPH + H(+). Its pathway is cell wall biogenesis; peptidoglycan biosynthesis. In terms of biological role, cell wall formation. The sequence is that of UDP-N-acetylenolpyruvoylglucosamine reductase from Thermobifida fusca (strain YX).